We begin with the raw amino-acid sequence, 314 residues long: Olfactory receptor-like protein I9 (314 aa).

Over 1 to 25 (MTRRNQTAISQFFLLGLPFPPEYQH) the chain is Extracellular. Residue asparagine 5 is glycosylated (N-linked (GlcNAc...) asparagine). The helical transmembrane segment at 26–50 (LFYALFLAMYLTTLLGNLIIIILIL) threads the bilayer. Residues 51–57 (LDSHLHT) lie on the Cytoplasmic side of the membrane. A helical transmembrane segment spans residues 58–79 (PMYLFLSNLSFADLCFSSVTMP). Residues 80 to 100 (KLLQNMQSQVPSIPYAGCLAQ) are Extracellular-facing. Cysteine 97 and cysteine 189 form a disulfide bridge. The helical transmembrane segment at 101–120 (IYFFLFFGDLGNFLLVAMAY) threads the bilayer. At 121–139 (DRYVAICFPLHYMSIMSPK) the chain is on the cytoplasmic side. The helical transmembrane segment at 140–158 (LCVSLVVLSWVLTTFHAML) threads the bilayer. Residues 159–196 (HTLLMARLSFCEDSVIPHYFCDMSTLLKVACSDTHDNE) are Extracellular-facing. Residues 197–219 (LAIFILGGPIVVLPFLLIIVSYA) form a helical membrane-spanning segment. The Cytoplasmic segment spans residues 220-236 (RIVSSIFKVPSSQSIHK). Residues 237 to 260 (AFSTCGSHLSVVSLFYGTVIGLYL) traverse the membrane as a helical segment. At 261–272 (CPSANNSTVKET) the chain is on the extracellular side. A helical transmembrane segment spans residues 273 to 292 (VMSLMYTMVTPMLNPFIYSL). Residues 293–314 (RNRDIKDALEKIMCKKQIPSFL) lie on the Cytoplasmic side of the membrane.

The protein belongs to the G-protein coupled receptor 1 family. Olfactory epithelium.

It is found in the cell membrane. Functionally, odorant receptor. The sequence is that of Olfactory receptor-like protein I9 from Rattus norvegicus (Rat).